The primary structure comprises 457 residues: MALWGGRFTQAADQRFKQFNDSLRFDYRLAEQDIVGSVAWSKALVTVGVLTAEEQAQLEEALNVLLEDVRARPQQILESDAEDIHSWVEGKLIDKVGQLGKKLHTGRSRNDQVATDLKLWCKDTVSELLTANRQLQSALVETAQNNQDAVMPGYTHLQRAQPVTFAHWCLAYVEMLARDESRLQDALKRLDVSPLGCGALAGTAYEIDREQLAGWLGFASATRNSLDSVSDRDHVLELLSAAAIGMVHLSRFAEDLIFFNTGEAGFVELSDRVTSGSSLMPQKKNPDALELIRGKCGRVQGALTGMMMTLKGLPLAYNKDMQEDKEGLFDALDTWLDCLHMAALVLDGIQVKRPRCQEAAQQGYANATELADYLVAKGVPFREAHHIVGEAVVEAIRQGKPLEDLPLSELQKFSQVIGEDVYPILSLQSCLDKRAAKGGVSPQQVAQAIAFAQARLG.

This sequence belongs to the lyase 1 family. Argininosuccinate lyase subfamily.

It localises to the cytoplasm. The enzyme catalyses 2-(N(omega)-L-arginino)succinate = fumarate + L-arginine. It participates in amino-acid biosynthesis; L-arginine biosynthesis; L-arginine from L-ornithine and carbamoyl phosphate: step 3/3. The chain is Argininosuccinate lyase from Escherichia coli O7:K1 (strain IAI39 / ExPEC).